A 355-amino-acid chain; its full sequence is MNQPKSAPNSTDSAQGLSYRDAGVDIDAGDALVDAIKPFARKTMRDGVLGGIGGFGALFEVPKKYKEPVLVSGTDGVGTKLRLAFQLNKHDTVGQDLVAMSVNDILVQGAEPLFFLDYFACGKLDVGTAATVVKGIAYGCELSGCALIGGETAEMPGMYPDGEYDLAGFAVGAVEKSKIIDGSTIAPGDVVLGLASSGIHSNGFSLVRKIIERAQPDLNADFDGRSLADALMAPTHIYVKPLLALMQQIAVKGMAHITGGGLVENIPRVLREGLTAELDHRGWPLPPLFSWLQKHGGVADAEMHRVFNCGIGMAVVVSAADADAAIGLLSAAGEQVWKIGVIRESAAGEAQTVVI.

Belongs to the AIR synthase family.

The protein resides in the cytoplasm. It carries out the reaction 2-formamido-N(1)-(5-O-phospho-beta-D-ribosyl)acetamidine + ATP = 5-amino-1-(5-phospho-beta-D-ribosyl)imidazole + ADP + phosphate + H(+). It participates in purine metabolism; IMP biosynthesis via de novo pathway; 5-amino-1-(5-phospho-D-ribosyl)imidazole from N(2)-formyl-N(1)-(5-phospho-D-ribosyl)glycinamide: step 2/2. In Paraburkholderia xenovorans (strain LB400), this protein is Phosphoribosylformylglycinamidine cyclo-ligase.